Consider the following 1025-residue polypeptide: MHRKKVDNRIRILIENGVAERQRSLFVVVGDRGKDQVVILHHMLSKATVKARPSVLWCYKKELGFSSHRKKRMRQLQKKIKNGTLNIKQDDPFELFIAATNIRYCYYNETHKILGNTFGMCVLQDFEALTPNLLARTVETVEGGGLVVILLRTMNSLKQLYTVTMDVHSRYRTEAHQDVVGRFNERFILSLASCKKCLVIDDQLNILPISSHVATMEALPPQTPDESLGPSDLELRELKESLQDTQPVGVLVDCCKTLDQAKAVLKFIEGISEKTLRSTVALTAARGRGKSAALGLAIAGAVAFGYSNIFVTSPSPDNLHTLFEFVFKGFDALQYQEHLDYEIIQSLNPEFNKAVIRVNVFREHRQTIQYIHPADAVKLGQAELVVIDEAAAIPLPLVKSLLGPYLVFMASTINGYEGTGRSLSLKLIQQLRQQSAQSQVSTTAENKTTTTARLASARTLYEVSLQESIRYAPGDAVEKWLNDLLCLDCLNITRIVSGCPLPEACELYYVNRDTLFCYHKASEVFLQRLMALYVASHYKNSPNDLQMLSDAPAHHLFCLLPPVPPTQNALPEVLAVIQVCLEGEISRQSILNSLSRGKKASGDLIPWTVSEQFQDPDFGGLSGGRVVRIAVHPDYQGMGYGSRALQLLQMYYEGRFPCLEEKVLETPQEIHTVSSEAVSLLEEVITPRKDLPPLLLKLNERPAERLDYLGVSYGLTPRLLKFWKRAGFVPVYLRQTPNDLTGEHSCIMLKTLTDEDEADQGGWLAAFWKDFRRRFLALLSYQFSTFSPSLALNIIQNRNMGKPAQPALSREELEALFLPYDLKRLEMYSRNMVDYHLIMDMIPAISRIYFLNQLGDLALSAAQSALLLGIGLQHKSVDQLEKEIELPSGQLMGLFNRIIRKVVKLFNEVQEKAIEEQMVAAKDVVMEPTMKTLSDDLDEAAKEFQEKHKKEVGKLKSMDLSEYIIRGDDEEWNEVLNKAGPNASIISLKSDKKRKLEAKQEPKQSKKLKNRETKNKKDMKLKRKK.

An ATP-binding site is contributed by 287 to 296 (GRGKSAALGL). The residue at position 426 (lysine 426) is an N6-acetyllysine. Arginine 470 is a binding site for ATP. Positions 558 to 753 (CLLPPVPPTQ…HSCIMLKTLT (196 aa)) constitute an N-acetyltransferase domain. Residues 629–631 (IAV) and 636–642 (QGMGYGS) contribute to the acetyl-CoA site. Residues 702–1025 (PAERLDYLGV…KKDMKLKRKK (324 aa)) are required for localization to the nucleolus and midbody. At threonine 716 the chain carries Phosphothreonine. Arginine 725 is a binding site for acetyl-CoA. Residues serine 934, serine 984, and serine 987 each carry the phosphoserine modification. The segment at 990–1025 (SDKKRKLEAKQEPKQSKKLKNRETKNKKDMKLKRKK) is disordered. Residues 997–1018 (EAKQEPKQSKKLKNRETKNKKD) are compositionally biased toward basic and acidic residues.

The protein belongs to the RNA cytidine acetyltransferase family. NAT10 subfamily. Part of the small subunit (SSU) processome, composed of more than 70 proteins and the RNA chaperone small nucleolar RNA (snoRNA) U3. Interacts with THUMPD1. Interacts with SUN1 (via N-terminus). Interacts with TERT. Post-translationally, acetylation at Lys-426 is required to activation of rRNA transcription. May be autoacetylated; however ability to autoacetylate in vivo requires additional evidences.

The protein resides in the nucleus. It is found in the nucleolus. The protein localises to the midbody. The enzyme catalyses a cytidine in 18S rRNA + acetyl-CoA + ATP + H2O = an N(4)-acetylcytidine in 18S rRNA + ADP + phosphate + CoA + H(+). It catalyses the reaction a cytidine in tRNA + acetyl-CoA + ATP + H2O = an N(4)-acetylcytidine in tRNA + ADP + phosphate + CoA + H(+). The catalysed reaction is a cytidine in mRNA + acetyl-CoA + ATP + H2O = an N(4)-acetylcytidine in mRNA + ADP + phosphate + CoA + H(+). With respect to regulation, specifically inhibited by remodelin (4-[2-(2-cyclopentylidenehydrazinyl)-4-thiazolyl]-benzonitrile, monohydrobromide), a hydrobromide salt molecule. Remodelin can improve nuclear architecture, chromatin organization and fitness of cells from patients suffering from Hutchinson-Gilford progeria syndrome (HGPS); molecular mechanisms explaining the relation between NAT10 activity and nuclear architecture are however unclear. RNA cytidine acetyltransferase that catalyzes the formation of N(4)-acetylcytidine (ac4C) modification on mRNAs, 18S rRNA and tRNAs. Catalyzes ac4C modification of a broad range of mRNAs, enhancing mRNA stability and translation. mRNA ac4C modification is frequently present within wobble cytidine sites and promotes translation efficiency. Mediates the formation of ac4C at position 1842 in 18S rRNA. May also catalyze the formation of ac4C at position 1337 in 18S rRNA. Required for early nucleolar cleavages of precursor rRNA at sites A0, A1 and A2 during 18S rRNA synthesis. Catalyzes the formation of ac4C in serine and leucine tRNAs. Requires the tRNA-binding adapter protein THUMPD1 for full tRNA acetyltransferase activity but not for 18S rRNA acetylation. In addition to RNA acetyltransferase activity, also able to acetylate lysine residues of proteins, such as histones, microtubules, p53/TP53 and MDM2, in vitro. The relevance of the protein lysine acetyltransferase activity is however unsure in vivo. Activates telomerase activity by stimulating the transcription of TERT, and may also regulate telomerase function by affecting the balance of telomerase subunit assembly, disassembly, and localization. Involved in the regulation of centrosome duplication by acetylating CENATAC during mitosis, promoting SASS6 proteasome degradation. Part of the small subunit (SSU) processome, first precursor of the small eukaryotic ribosomal subunit. During the assembly of the SSU processome in the nucleolus, many ribosome biogenesis factors, an RNA chaperone and ribosomal proteins associate with the nascent pre-rRNA and work in concert to generate RNA folding, modifications, rearrangements and cleavage as well as targeted degradation of pre-ribosomal RNA by the RNA exosome. This Homo sapiens (Human) protein is RNA cytidine acetyltransferase.